The chain runs to 334 residues: Type IV inositol polyphosphate 5-phosphatase 11 (334 aa).

Catalytic regions lie at residues 206 to 222 (DLTVWLGDLNYRIQDVS) and 282 to 297 (KIRVPAWTDRILFKIQ).

It belongs to the inositol polyphosphate 5-phosphatase family. In terms of tissue distribution, expressed ubiquitously.

It localises to the cell membrane. The enzyme catalyses a 1,2-diacyl-sn-glycero-3-phospho-(1D-myo-inositol-4,5-bisphosphate) + H2O = a 1,2-diacyl-sn-glycero-3-phospho-(1D-myo-inositol 4-phosphate) + phosphate. It catalyses the reaction a 1,2-diacyl-sn-glycero-3-phospho-(1D-myo-inositol-3,4,5-trisphosphate) + H2O = a 1,2-diacyl-sn-glycero-3-phospho-(1D-myo-inositol-3,4-bisphosphate) + phosphate. In terms of biological role, has phosphatase activity toward PtdIns(4,5)P2, and in vitro toward PtdIns(3,5)P2 and PtdIns(3,4,5)P3. Cannot dephosphorylate PtdIns(5)P, Ins(1,4,5)P3 and Ins(1,3,4,5)P4. This chain is Type IV inositol polyphosphate 5-phosphatase 11, found in Arabidopsis thaliana (Mouse-ear cress).